Here is a 359-residue protein sequence, read N- to C-terminus: Small ribosomal subunit protein mS22 (359 aa).

Residues 40–65 (RPQPFEVGQPRRLLSSEAESGSSEVK) form a disordered region. S54 bears the Phosphoserine mark. K210 carries the post-translational modification N6-acetyllysine.

Belongs to the mitochondrion-specific ribosomal protein mS22 family. As to quaternary structure, component of the mitochondrial ribosome small subunit (28S) which comprises a 12S rRNA and about 30 distinct proteins.

It localises to the mitochondrion. The sequence is that of Small ribosomal subunit protein mS22 (Mrps22) from Mus musculus (Mouse).